The following is a 424-amino-acid chain: Enolase (424 aa).

Gln-162 lines the (2R)-2-phosphoglycerate pocket. The active-site Proton donor is Glu-204. Residues Asp-241, Glu-284, and Asp-311 each contribute to the Mg(2+) site. Positions 336, 365, 366, and 387 each coordinate (2R)-2-phosphoglycerate. Catalysis depends on Lys-336, which acts as the Proton acceptor.

Belongs to the enolase family. It depends on Mg(2+) as a cofactor.

Its subcellular location is the cytoplasm. The protein localises to the secreted. The protein resides in the cell surface. The catalysed reaction is (2R)-2-phosphoglycerate = phosphoenolpyruvate + H2O. It participates in carbohydrate degradation; glycolysis; pyruvate from D-glyceraldehyde 3-phosphate: step 4/5. Its function is as follows. Catalyzes the reversible conversion of 2-phosphoglycerate (2-PG) into phosphoenolpyruvate (PEP). It is essential for the degradation of carbohydrates via glycolysis. In Agrobacterium fabrum (strain C58 / ATCC 33970) (Agrobacterium tumefaciens (strain C58)), this protein is Enolase.